The primary structure comprises 426 residues: UDP-N-acetylglucosamine 1-carboxyvinyltransferase 2 (426 aa).

Phosphoenolpyruvate is bound at residue 22-23; that stretch reads KN. Arg92 contacts UDP-N-acetyl-alpha-D-glucosamine. Asp116 acts as the Proton donor in catalysis. Residues 121–125, Asp307, and Ile329 contribute to the UDP-N-acetyl-alpha-D-glucosamine site; that span reads RPIDQ.

Belongs to the EPSP synthase family. MurA subfamily.

It localises to the cytoplasm. The catalysed reaction is phosphoenolpyruvate + UDP-N-acetyl-alpha-D-glucosamine = UDP-N-acetyl-3-O-(1-carboxyvinyl)-alpha-D-glucosamine + phosphate. It functions in the pathway cell wall biogenesis; peptidoglycan biosynthesis. Cell wall formation. Adds enolpyruvyl to UDP-N-acetylglucosamine. This Lactiplantibacillus plantarum (strain ATCC BAA-793 / NCIMB 8826 / WCFS1) (Lactobacillus plantarum) protein is UDP-N-acetylglucosamine 1-carboxyvinyltransferase 2.